The primary structure comprises 516 residues: Squalene epoxidase 5 (516 aa).

A run of 2 helical transmembrane segments spans residues 3–23 (FTNV…VFYV) and 45–65 (ATDV…YALA). Residues 55 to 56 (VG), 75 to 76 (ER), Arg83, Phe88, Arg156, Val172, Asp335, and Met348 contribute to the FAD site. The chain crosses the membrane as a helical span at residues 446 to 466 (LIYHLCAITLSSIGHLLSPFP).

The protein belongs to the squalene monooxygenase family. The cofactor is FAD. As to expression, expressed in seedlings, leaves, stems and inflorescences. Detected in siliques.

Its subcellular location is the membrane. It catalyses the reaction squalene + reduced [NADPH--hemoprotein reductase] + O2 = (S)-2,3-epoxysqualene + oxidized [NADPH--hemoprotein reductase] + H2O + H(+). It participates in terpene metabolism; lanosterol biosynthesis; lanosterol from farnesyl diphosphate: step 2/3. Its function is as follows. Catalyzes the stereospecific oxidation of squalene to (S)-2,3-epoxysqualene, and is considered to be a rate-limiting enzyme in steroid biosynthesis. The chain is Squalene epoxidase 5 (SQE5) from Arabidopsis thaliana (Mouse-ear cress).